Consider the following 171-residue polypeptide: 3-hydroxydecanoyl-[acyl-carrier-protein] dehydratase (171 aa).

The active site involves His-69.

It belongs to the thioester dehydratase family. FabA subfamily. As to quaternary structure, homodimer.

It localises to the cytoplasm. It carries out the reaction a (3R)-hydroxyacyl-[ACP] = a (2E)-enoyl-[ACP] + H2O. It catalyses the reaction (3R)-hydroxydecanoyl-[ACP] = (2E)-decenoyl-[ACP] + H2O. The catalysed reaction is (2E)-decenoyl-[ACP] = (3Z)-decenoyl-[ACP]. It functions in the pathway lipid metabolism; fatty acid biosynthesis. In terms of biological role, necessary for the introduction of cis unsaturation into fatty acids. Catalyzes the dehydration of (3R)-3-hydroxydecanoyl-ACP to E-(2)-decenoyl-ACP and then its isomerization to Z-(3)-decenoyl-ACP. Can catalyze the dehydratase reaction for beta-hydroxyacyl-ACPs with saturated chain lengths up to 16:0, being most active on intermediate chain length. In Caulobacter sp. (strain K31), this protein is 3-hydroxydecanoyl-[acyl-carrier-protein] dehydratase.